Here is a 504-residue protein sequence, read N- to C-terminus: SPbeta prophage-derived uncharacterized protein YorI (504 aa).

The protein is SPbeta prophage-derived uncharacterized protein YorI (yorI) of Bacillus subtilis (strain 168).